A 172-amino-acid polypeptide reads, in one-letter code: Translation initiation factor IF-3 (172 aa).

Belongs to the IF-3 family. In terms of assembly, monomer.

The protein resides in the cytoplasm. Functionally, IF-3 binds to the 30S ribosomal subunit and shifts the equilibrium between 70S ribosomes and their 50S and 30S subunits in favor of the free subunits, thus enhancing the availability of 30S subunits on which protein synthesis initiation begins. The protein is Translation initiation factor IF-3 of Campylobacter concisus (strain 13826).